Consider the following 222-residue polypeptide: uncharacterized protein (222 aa).

A disordered region spans residues 142–222 (ARRGGCVHPP…LPDPPSAGHL (81 aa)). Over residues 160–169 (QSRSISSRRA) the composition is skewed to low complexity. Positions 182–196 (PRRRPHRHRTRPQTR) are enriched in basic residues.

It belongs to the Rv1128c/1148c/1588c/1702c/1945/3466 family.

This is an uncharacterized protein from Mycobacterium tuberculosis (strain CDC 1551 / Oshkosh).